The primary structure comprises 302 residues: MTGKIIKGIAGFYYVYVEETKEAKETATGGTLYECKAKGTFRKQKIKPLVGDTVDIAVLDEEKHIGNVERILPRKNELIRPAVSNIDMALVIFASAKPDPNFNLLDRFLCMMEYQHVPVTICFNKKDLITPQKQQELKSIYEPAGYRVMFTSTKTGEGIDEIKHVLEGRTTTVAGPSGVGKSSIINCLQDDVQMETGHISEKIERGKHTTRHSEIIPIKDGTYIMDTPGFSSMDVPGFEKEDLWTCYPEFVEYEPYCRFQGCSHINEPDCGVKEALSEGKISQVRYDNYKLLYEELKNRQKY.

One can recognise a CP-type G domain in the interval 75–233; it reads KNELIRPAVS…IMDTPGFSSM (159 aa). GTP is bound by residues 124 to 127 and 175 to 183; these read NKKD and GPSGVGKSS. Zn(2+) is bound by residues cysteine 257, cysteine 262, histidine 264, and cysteine 270.

It belongs to the TRAFAC class YlqF/YawG GTPase family. RsgA subfamily. In terms of assembly, monomer. Associates with 30S ribosomal subunit, binds 16S rRNA. Zn(2+) is required as a cofactor.

It is found in the cytoplasm. Functionally, one of several proteins that assist in the late maturation steps of the functional core of the 30S ribosomal subunit. Helps release RbfA from mature subunits. May play a role in the assembly of ribosomal proteins into the subunit. Circularly permuted GTPase that catalyzes slow GTP hydrolysis, GTPase activity is stimulated by the 30S ribosomal subunit. The protein is Small ribosomal subunit biogenesis GTPase RsgA of Agathobacter rectalis (strain ATCC 33656 / DSM 3377 / JCM 17463 / KCTC 5835 / VPI 0990) (Eubacterium rectale).